The sequence spans 223 residues: Phosphoribosylformylglycinamidine synthase subunit PurQ (223 aa).

One can recognise a Glutamine amidotransferase type-1 domain in the interval 4-223 (FAVIVFPGTN…FKSIVEWMKK (220 aa)). The active-site Nucleophile is the C85. Residues H196 and E198 contribute to the active site.

Part of the FGAM synthase complex composed of 1 PurL, 1 PurQ and 2 PurS subunits.

It localises to the cytoplasm. It carries out the reaction N(2)-formyl-N(1)-(5-phospho-beta-D-ribosyl)glycinamide + L-glutamine + ATP + H2O = 2-formamido-N(1)-(5-O-phospho-beta-D-ribosyl)acetamidine + L-glutamate + ADP + phosphate + H(+). The catalysed reaction is L-glutamine + H2O = L-glutamate + NH4(+). It functions in the pathway purine metabolism; IMP biosynthesis via de novo pathway; 5-amino-1-(5-phospho-D-ribosyl)imidazole from N(2)-formyl-N(1)-(5-phospho-D-ribosyl)glycinamide: step 1/2. Part of the phosphoribosylformylglycinamidine synthase complex involved in the purines biosynthetic pathway. Catalyzes the ATP-dependent conversion of formylglycinamide ribonucleotide (FGAR) and glutamine to yield formylglycinamidine ribonucleotide (FGAM) and glutamate. The FGAM synthase complex is composed of three subunits. PurQ produces an ammonia molecule by converting glutamine to glutamate. PurL transfers the ammonia molecule to FGAR to form FGAM in an ATP-dependent manner. PurS interacts with PurQ and PurL and is thought to assist in the transfer of the ammonia molecule from PurQ to PurL. The chain is Phosphoribosylformylglycinamidine synthase subunit PurQ from Pyrococcus horikoshii (strain ATCC 700860 / DSM 12428 / JCM 9974 / NBRC 100139 / OT-3).